Consider the following 445-residue polypeptide: Exodeoxyribonuclease 7 large subunit (445 aa).

Belongs to the XseA family. Heterooligomer composed of large and small subunits.

The protein localises to the cytoplasm. It carries out the reaction Exonucleolytic cleavage in either 5'- to 3'- or 3'- to 5'-direction to yield nucleoside 5'-phosphates.. In terms of biological role, bidirectionally degrades single-stranded DNA into large acid-insoluble oligonucleotides, which are then degraded further into small acid-soluble oligonucleotides. This is Exodeoxyribonuclease 7 large subunit from Shewanella oneidensis (strain ATCC 700550 / JCM 31522 / CIP 106686 / LMG 19005 / NCIMB 14063 / MR-1).